The sequence spans 2083 residues: Nonribosomal peptide synthetase sidD (2083 aa).

An adenylation 1 region spans residues 251 to 650 (TYRQIDQYSS…GEIESQLRAR (400 aa)). In terms of domain architecture, Carrier 1 spans 764 to 840 (RELSDLERRL…AMASVVRICD (77 aa)). The residue at position 801 (S801) is an O-(pantetheine 4'-phosphoryl)serine. The tract at residues 876–1146 (EDIYPCTPTQ…IATVPIRVRI (271 aa)) is condensation 1. Residues 1336–1421 (LSPIGCVGEL…TEIERHLAEH (86 aa)) are adenylation 2. The Carrier 2 domain occupies 1557 to 1633 (NHLSASESIL…DAARVMKVDE (77 aa)). At S1594 the chain carries O-(pantetheine 4'-phosphoryl)serine. A condensation 2 region spans residues 1674–1946 (DVLPVTDSQD…YQLTPVRVPF (273 aa)).

This sequence belongs to the NRP synthetase family.

It participates in siderophore biosynthesis. Nonribosomal peptide synthetase; part of the siderophore biosynthetic pathway. Aspergillus fumigatus produces four types of siderophores, low-molecular-mass iron chelators, including excreted fusarinine C (FsC) and triacetylfusarinine C (TAFC) for iron uptake; and intacellular ferricrocin (FC) for hyphal and hydroxyferricrocin (HFC) for conidial iron distribution and storage. TAFC consists of three N(2)-acetyl-N(5)-anhydromevalonyl-N(5)-hydroxyornithine residues cyclically linked by ester bonds; FC is a cyclic hexapeptide with the structure Gly-Ser-Gly-(N(5)-acetyl-N(5)-hydroxyornithine)x3. The biosynthesis of all four siderophores depends on the hydroxylation of ornithine, catalyzed by the monooxygenase sidA. Subsequently, the pathways for biosynthesis of extra- and intracellular siderophores split. For biosynthesis of extracellular siderophores, the transacylase sidF transfers anhydromevalonyl to N(5)-hydroxyornithine. The required anhydromevalonyl-CoA moiety is derived from mevalonate by CoA ligation and dehydration catalyzed by sidI and sidH respectively. The acetylation of N(5)-hydroxyornithine for FC biosynthesis involves the constitutively expressed sidL. FC is hydroxylated to HFC by an as yet uncharacterized enzyme during conidiation. Assembly of fusarinine C (FsC) and FC is catalyzed by two different nonribosomal peptide synthetases (NRPS), sidD and sidC respectively. Subsequently, sidG catalyzes N2-acetylation of FsC for forming TAFC. Both extra- and intracellular siderophores are crucial for growth during iron limitation and virulence. The protein is Nonribosomal peptide synthetase sidD of Aspergillus fumigatus (strain ATCC MYA-4609 / CBS 101355 / FGSC A1100 / Af293) (Neosartorya fumigata).